The primary structure comprises 61 residues: Large ribosomal subunit protein uL30 (61 aa).

The protein belongs to the universal ribosomal protein uL30 family. Part of the 50S ribosomal subunit.

In Legionella pneumophila (strain Paris), this protein is Large ribosomal subunit protein uL30.